The primary structure comprises 113 residues: Protein translation factor SUI1 homolog (113 aa).

This sequence belongs to the SUI1 family.

Functionally, probably involved in translation. This chain is Protein translation factor SUI1 homolog, found in Spuriopimpinella brachycarpa (Chamnamul).